We begin with the raw amino-acid sequence, 218 residues long: Cytochrome c biogenesis ATP-binding export protein CcmA (218 aa).

Residues 2 to 217 (LEAKNLTCIR…KSCLSACCAV (216 aa)) form the ABC transporter domain. Position 34–41 (34–41 (GPNGAGKT)) interacts with ATP.

Belongs to the ABC transporter superfamily. CcmA exporter (TC 3.A.1.107) family. The complex is composed of two ATP-binding proteins (CcmA) and two transmembrane proteins (CcmB).

It is found in the cell inner membrane. It catalyses the reaction heme b(in) + ATP + H2O = heme b(out) + ADP + phosphate + H(+). Its function is as follows. Part of the ABC transporter complex CcmAB involved in the biogenesis of c-type cytochromes; once thought to export heme, this seems not to be the case, but its exact role is uncertain. Responsible for energy coupling to the transport system. The polypeptide is Cytochrome c biogenesis ATP-binding export protein CcmA (Yersinia pseudotuberculosis serotype I (strain IP32953)).